The primary structure comprises 181 residues: Large ribosomal subunit protein uL5 (181 aa).

Belongs to the universal ribosomal protein uL5 family. As to quaternary structure, part of the 50S ribosomal subunit; part of the 5S rRNA/L5/L18/L25 subcomplex. Contacts the 5S rRNA and the P site tRNA. Forms a bridge to the 30S subunit in the 70S ribosome.

Its function is as follows. This is one of the proteins that bind and probably mediate the attachment of the 5S RNA into the large ribosomal subunit, where it forms part of the central protuberance. In the 70S ribosome it contacts protein S13 of the 30S subunit (bridge B1b), connecting the 2 subunits; this bridge is implicated in subunit movement. Contacts the P site tRNA; the 5S rRNA and some of its associated proteins might help stabilize positioning of ribosome-bound tRNAs. The chain is Large ribosomal subunit protein uL5 from Campylobacter jejuni subsp. doylei (strain ATCC BAA-1458 / RM4099 / 269.97).